A 516-amino-acid polypeptide reads, in one-letter code: GMP synthase [glutamine-hydrolyzing] (516 aa).

A Glutamine amidotransferase type-1 domain is found at 10–201 (KIIVLDFGSQ…AFDVCGAVAN (192 aa)). The active-site Nucleophile is C87. Active-site residues include H175 and E177. The GMPS ATP-PPase domain occupies 202–391 (WTMADFIDMQ…LGIPHDLVWR (190 aa)). Position 229–235 (229–235 (SGGVDSS)) interacts with ATP.

As to quaternary structure, homodimer.

The enzyme catalyses XMP + L-glutamine + ATP + H2O = GMP + L-glutamate + AMP + diphosphate + 2 H(+). It participates in purine metabolism; GMP biosynthesis; GMP from XMP (L-Gln route): step 1/1. Functionally, catalyzes the synthesis of GMP from XMP. The polypeptide is GMP synthase [glutamine-hydrolyzing] (Lactobacillus acidophilus (strain ATCC 700396 / NCK56 / N2 / NCFM)).